The following is a 164-amino-acid chain: Lipoprotein signal peptidase (164 aa).

3 helical membrane-spanning segments follow: residues 12–32 (WLWLVVVVLIIDLGSKYLILQ), 70–90 (WFFAGIAIGISVILVVMMYRS), and 102–122 (ALIIGGALGNLFDRLWHGFVV). Residues Asp123 and Asp141 contribute to the active site. A helical transmembrane segment spans residues 137 to 157 (FNLADTAICVGAALIVLEGFL).

Belongs to the peptidase A8 family.

The protein localises to the cell inner membrane. The catalysed reaction is Release of signal peptides from bacterial membrane prolipoproteins. Hydrolyzes -Xaa-Yaa-Zaa-|-(S,diacylglyceryl)Cys-, in which Xaa is hydrophobic (preferably Leu), and Yaa (Ala or Ser) and Zaa (Gly or Ala) have small, neutral side chains.. It participates in protein modification; lipoprotein biosynthesis (signal peptide cleavage). Functionally, this protein specifically catalyzes the removal of signal peptides from prolipoproteins. This chain is Lipoprotein signal peptidase, found in Escherichia coli O6:K15:H31 (strain 536 / UPEC).